Consider the following 95-residue polypeptide: Histone-like DNA-binding protein (95 aa).

Belongs to the bacterial histone-like protein family.

The protein is Histone-like DNA-binding protein of Rickettsia montanensis.